The chain runs to 427 residues: GTPase Obg (427 aa).

An Obg domain is found at 1 to 158 (MFVDKVKVYV…RDVILELKVL (158 aa)). A disordered region spans residues 118–144 (KGGRGGRGNTRFATPANPAPELSENGE). Positions 159-329 (ADAGLVGFPS…LLRAIMDTIE (171 aa)) constitute an OBG-type G domain. Residues 165-172 (GFPSVGKS), 190-194 (FTTIT), 212-215 (DLPG), 282-285 (NKMD), and 310-312 (SAL) each bind GTP. Mg(2+) is bound by residues Ser-172 and Thr-192. Residues 349-427 (KHDKEQDPFV…LLEFEFEFIE (79 aa)) form the OCT domain.

Belongs to the TRAFAC class OBG-HflX-like GTPase superfamily. OBG GTPase family. As to quaternary structure, monomer. Requires Mg(2+) as cofactor.

The protein localises to the cytoplasm. In terms of biological role, an essential GTPase which binds GTP, GDP and possibly (p)ppGpp with moderate affinity, with high nucleotide exchange rates and a fairly low GTP hydrolysis rate. Plays a role in control of the cell cycle, stress response, ribosome biogenesis and in those bacteria that undergo differentiation, in morphogenesis control. This is GTPase Obg from Halalkalibacterium halodurans (strain ATCC BAA-125 / DSM 18197 / FERM 7344 / JCM 9153 / C-125) (Bacillus halodurans).